The sequence spans 230 residues: Thymidylate kinase (230 aa).

20–27 (GGEGAGKS) is an ATP binding site.

This sequence belongs to the thymidylate kinase family.

It carries out the reaction dTMP + ATP = dTDP + ADP. In terms of biological role, phosphorylation of dTMP to form dTDP in both de novo and salvage pathways of dTTP synthesis. This chain is Thymidylate kinase, found in Rhodopseudomonas palustris (strain BisB18).